A 245-amino-acid chain; its full sequence is Adapter protein MecA (245 aa).

It belongs to the MecA family. Homodimer.

Functionally, enables the recognition and targeting of unfolded and aggregated proteins to the ClpC protease or to other proteins involved in proteolysis. The chain is Adapter protein MecA from Streptococcus pneumoniae serotype 4 (strain ATCC BAA-334 / TIGR4).